Consider the following 293-residue polypeptide: Cytochrome c biogenesis protein CcsA (293 aa).

A run of 8 helical transmembrane segments spans residues 12–32, 39–59, 78–98, 99–119, 142–162, 216–236, 250–267, and 273–293; these read INILAFLGALVSSLFYWAKLT, VFSLPKFCLIFSNCIIAGMLL, LFLSWVLNIITIIFVDKLSII, GAIGSSAVTLIIGYANYILPP, VMIFSYGLLIMGAFLSLIYVI, FISLGFISLTLGIISGSVWAN, TWALITWLVFATYLHIRI, and KIYASLVASLGLIVICFVTWE.

It belongs to the CcmF/CycK/Ccl1/NrfE/CcsA family. In terms of assembly, may interact with Ccs1.

Its subcellular location is the plastid. The protein localises to the chloroplast thylakoid membrane. Functionally, required during biogenesis of c-type cytochromes (cytochrome c6 and cytochrome f) at the step of heme attachment. The sequence is that of Cytochrome c biogenesis protein CcsA from Cyanidium caldarium (Red alga).